A 624-amino-acid polypeptide reads, in one-letter code: Phosphomethylpyrimidine synthase (624 aa).

Positions 75 to 99 (SPWIESRGDTESYTGRTPFALDDGL) are disordered. Residues Asn226, Met255, Tyr284, His320, 340-342 (SRG), 381-384 (DGLR), and Glu420 contribute to the substrate site. His424 provides a ligand contact to Zn(2+). A substrate-binding site is contributed by Tyr447. His488 is a Zn(2+) binding site. [4Fe-4S] cluster is bound by residues Cys568, Cys571, and Cys576.

The protein belongs to the ThiC family. As to quaternary structure, homodimer. Requires [4Fe-4S] cluster as cofactor.

The enzyme catalyses 5-amino-1-(5-phospho-beta-D-ribosyl)imidazole + S-adenosyl-L-methionine = 4-amino-2-methyl-5-(phosphooxymethyl)pyrimidine + CO + 5'-deoxyadenosine + formate + L-methionine + 3 H(+). It participates in cofactor biosynthesis; thiamine diphosphate biosynthesis. Its function is as follows. Catalyzes the synthesis of the hydroxymethylpyrimidine phosphate (HMP-P) moiety of thiamine from aminoimidazole ribotide (AIR) in a radical S-adenosyl-L-methionine (SAM)-dependent reaction. The chain is Phosphomethylpyrimidine synthase from Albidiferax ferrireducens (strain ATCC BAA-621 / DSM 15236 / T118) (Rhodoferax ferrireducens).